The primary structure comprises 545 residues: Periplasmic trehalase (545 aa).

The N-terminal stretch at 1-30 (MPDRTALPRAMLAAWVLLLLAACSQGPAPT) is a signal peptide. Residues arginine 160, 167 to 168 (WD), asparagine 204, 213 to 215 (RSQ), 285 to 287 (RQE), and glycine 318 contribute to the substrate site. Active-site proton donor/acceptor residues include aspartate 320 and glutamate 503. Glutamate 518 provides a ligand contact to substrate.

Belongs to the glycosyl hydrolase 37 family.

The protein resides in the periplasm. It catalyses the reaction alpha,alpha-trehalose + H2O = alpha-D-glucose + beta-D-glucose. Its function is as follows. Provides the cells with the ability to utilize trehalose at high osmolarity by splitting it into glucose molecules that can subsequently be taken up by the phosphotransferase-mediated uptake system. This chain is Periplasmic trehalase, found in Pseudomonas aeruginosa (strain ATCC 15692 / DSM 22644 / CIP 104116 / JCM 14847 / LMG 12228 / 1C / PRS 101 / PAO1).